Here is a 214-residue protein sequence, read N- to C-terminus: Urease accessory protein UreF (214 aa).

Residues Ala-70–Ala-95 form a disordered region. Residues Arg-83 to Ala-95 are compositionally biased toward low complexity.

This sequence belongs to the UreF family. In terms of assembly, ureD, UreF and UreG form a complex that acts as a GTP-hydrolysis-dependent molecular chaperone, activating the urease apoprotein by helping to assemble the nickel containing metallocenter of UreC. The UreE protein probably delivers the nickel.

The protein resides in the cytoplasm. Required for maturation of urease via the functional incorporation of the urease nickel metallocenter. The chain is Urease accessory protein UreF from Mycolicibacterium vanbaalenii (strain DSM 7251 / JCM 13017 / BCRC 16820 / KCTC 9966 / NRRL B-24157 / PYR-1) (Mycobacterium vanbaalenii).